The sequence spans 210 residues: Ribosomal RNA large subunit methyltransferase E (210 aa).

5 residues coordinate S-adenosyl-L-methionine: Gly60, Trp62, Asp80, Asp96, and Asp121. Lys161 serves as the catalytic Proton acceptor.

The protein belongs to the class I-like SAM-binding methyltransferase superfamily. RNA methyltransferase RlmE family.

The protein resides in the cytoplasm. The enzyme catalyses uridine(2552) in 23S rRNA + S-adenosyl-L-methionine = 2'-O-methyluridine(2552) in 23S rRNA + S-adenosyl-L-homocysteine + H(+). In terms of biological role, specifically methylates the uridine in position 2552 of 23S rRNA at the 2'-O position of the ribose in the fully assembled 50S ribosomal subunit. The polypeptide is Ribosomal RNA large subunit methyltransferase E (Vesicomyosocius okutanii subsp. Calyptogena okutanii (strain HA)).